Consider the following 55-residue polypeptide: Large ribosomal subunit protein bL33 (55 aa).

It belongs to the bacterial ribosomal protein bL33 family.

This Paenarthrobacter aurescens (strain TC1) protein is Large ribosomal subunit protein bL33.